Here is a 329-residue protein sequence, read N- to C-terminus: Cathepsin K (329 aa).

The first 15 residues, 1–15, serve as a signal peptide directing secretion; sequence MWGLKVLLLPVVSFA. Positions 16–114 are cleaved as a propeptide — activation peptide; sequence LYPEEILDTH…TLYIPEWEGR (99 aa). Residue asparagine 103 is glycosylated (N-linked (GlcNAc...) asparagine). Disulfide bonds link cysteine 136–cysteine 177, cysteine 170–cysteine 210, and cysteine 269–cysteine 318. Cysteine 139 is an active-site residue. Catalysis depends on residues histidine 276 and asparagine 296.

Belongs to the peptidase C1 family. In terms of tissue distribution, predominantly expressed in osteoclasts (bones). Expressed in thyroid epithelial cells.

It is found in the lysosome. The protein localises to the secreted. The protein resides in the apical cell membrane. It catalyses the reaction Broad proteolytic activity. With small-molecule substrates and inhibitors, the major determinant of specificity is P2, which is preferably Leu, Met &gt; Phe, and not Arg.. Its function is as follows. Thiol protease involved in osteoclastic bone resorption and may participate partially in the disorder of bone remodeling. Displays potent endoprotease activity against fibrinogen at acid pH. May play an important role in extracellular matrix degradation. Involved in the release of thyroid hormone thyroxine (T4) by limited proteolysis of TG/thyroglobulin in the thyroid follicle lumen. This is Cathepsin K (CTSK) from Homo sapiens (Human).